Reading from the N-terminus, the 71-residue chain is Exodeoxyribonuclease 7 small subunit (71 aa).

It belongs to the XseB family. In terms of assembly, heterooligomer composed of large and small subunits.

The protein localises to the cytoplasm. It catalyses the reaction Exonucleolytic cleavage in either 5'- to 3'- or 3'- to 5'-direction to yield nucleoside 5'-phosphates.. Bidirectionally degrades single-stranded DNA into large acid-insoluble oligonucleotides, which are then degraded further into small acid-soluble oligonucleotides. The chain is Exodeoxyribonuclease 7 small subunit from Clostridium botulinum (strain Loch Maree / Type A3).